The following is a 317-amino-acid chain: Tyrosine--tRNA ligase (317 aa).

Tyr33 contacts L-tyrosine. The 'HIGH' region signature appears at 38-46 (PSGKIHMGH). Tyr155, Gln159, Asp162, and Gln177 together coordinate L-tyrosine. The short motif at 211-215 (KMSSS) is the 'KMSKS' region element. Position 214 (Ser214) interacts with ATP.

Belongs to the class-I aminoacyl-tRNA synthetase family. TyrS type 3 subfamily. Homodimer.

It is found in the cytoplasm. It catalyses the reaction tRNA(Tyr) + L-tyrosine + ATP = L-tyrosyl-tRNA(Tyr) + AMP + diphosphate + H(+). In terms of biological role, catalyzes the attachment of tyrosine to tRNA(Tyr) in a two-step reaction: tyrosine is first activated by ATP to form Tyr-AMP and then transferred to the acceptor end of tRNA(Tyr). This Methanococcoides burtonii (strain DSM 6242 / NBRC 107633 / OCM 468 / ACE-M) protein is Tyrosine--tRNA ligase.